Here is a 436-residue protein sequence, read N- to C-terminus: Ribosomal protein uS12 methylthiotransferase RimO (436 aa).

The 116-residue stretch at 2–117 (KNVGIISLGC…IAEVIEKIEK (116 aa)) folds into the MTTase N-terminal domain. [4Fe-4S] cluster contacts are provided by Cys-11, Cys-47, Cys-80, Cys-154, Cys-158, and Cys-161. Residues 140–369 (TTPNYYAYLK…MEIQKEISYQ (230 aa)) enclose the Radical SAM core domain. Positions 372 to 436 (LSKVGKQLEV…AYEYDLVGEY (65 aa)) constitute a TRAM domain.

This sequence belongs to the methylthiotransferase family. RimO subfamily. Requires [4Fe-4S] cluster as cofactor.

The protein localises to the cytoplasm. The catalysed reaction is L-aspartate(89)-[ribosomal protein uS12]-hydrogen + (sulfur carrier)-SH + AH2 + 2 S-adenosyl-L-methionine = 3-methylsulfanyl-L-aspartate(89)-[ribosomal protein uS12]-hydrogen + (sulfur carrier)-H + 5'-deoxyadenosine + L-methionine + A + S-adenosyl-L-homocysteine + 2 H(+). Its function is as follows. Catalyzes the methylthiolation of an aspartic acid residue of ribosomal protein uS12. The polypeptide is Ribosomal protein uS12 methylthiotransferase RimO (Thermoanaerobacter sp. (strain X514)).